We begin with the raw amino-acid sequence, 279 residues long: MKKISYFTKEKIECPVCSFKFQKEEFLTGSSRLIAGELKIDLKREYIKNDKYGNIYPRIYSITVCPKCYFAAFPSEFNSIPKNKKEILQNKKYERKKINTIFDNMLNFSKPRTLKEGAASYILAMLSYEHLEKNYNPTLNQAKSAIRAAWTFEDLEKEEPNKNYNYLQKIFYHKAAYLYKLVIEKDKDNSEPVSASTMFGPDTDKNYGYDSVLYLSGLLEYFYGNKDNKEYRYKQLNDIKTTLSKIAGMGKFSKEKPSILLDKIKEVYFKISKEMKNLK.

This is an uncharacterized protein from Borreliella burgdorferi (strain ATCC 35210 / DSM 4680 / CIP 102532 / B31) (Borrelia burgdorferi).